The following is a 439-amino-acid chain: Dihydroorotate dehydrogenase (quinone), mitochondrial (439 aa).

A mitochondrion-targeting transit peptide spans 1 to 22 (MMHRVGFNVIGRRSFFTVNARR). Residues 37–53 (LTALLLAGSAGYLYFMN) form a helical membrane-spanning segment. FMN is bound by residues 119-123 (AGLDK) and S143. K123 contacts substrate. 168–172 (NRYGF) is a binding site for substrate. FMN is bound by residues N215 and N245. 245 to 250 (NVSSPN) contributes to the substrate binding site. S248 acts as the Nucleophile in catalysis. 2 residues coordinate FMN: K296 and S324. 325 to 326 (NT) is a binding site for substrate. FMN-binding positions include G350, G380, and 401–402 (YT).

The protein belongs to the dihydroorotate dehydrogenase family. Type 2 subfamily. FMN serves as cofactor.

It localises to the mitochondrion inner membrane. It carries out the reaction (S)-dihydroorotate + a quinone = orotate + a quinol. The protein operates within pyrimidine metabolism; UMP biosynthesis via de novo pathway; orotate from (S)-dihydroorotate (quinone route): step 1/1. Functionally, catalyzes the conversion of dihydroorotate to orotate with quinone as electron acceptor. The polypeptide is Dihydroorotate dehydrogenase (quinone), mitochondrial (URA9) (Candida glabrata (strain ATCC 2001 / BCRC 20586 / JCM 3761 / NBRC 0622 / NRRL Y-65 / CBS 138) (Yeast)).